The primary structure comprises 153 residues: Transcriptional repressor NrdR (153 aa).

A zinc finger lies at cysteine 3–cysteine 34. Residues leucine 49–valine 139 form the ATP-cone domain.

It belongs to the NrdR family. It depends on Zn(2+) as a cofactor.

In terms of biological role, negatively regulates transcription of bacterial ribonucleotide reductase nrd genes and operons by binding to NrdR-boxes. The chain is Transcriptional repressor NrdR from Geobacillus sp. (strain WCH70).